The sequence spans 445 residues: MRLSRYFLPVLKEAPSDAQIVSHQLMLRAGMIRQEAAGIYAWLPLGLRVLKKVERIVREEMDRAGAIELLMPTIQLADLWRESGRYDDYGDEMLRITDRHKRDLLYGPTAEEVVTDIFRASVKSYKDLPKNLYNIQWKFRDERRPRFGVMRGREFLMKDAYSFDLDAEGARKAYNRMFVAYLNLFSRMGLKAVPMRADTGPIGGDLSHEFIVLAETGESAVFCHKDLVEMAAPGPDIDWYGDLQPLVNERTALYAATEEMHDEAAFAALPEGDRLSARGIEVGHIFSFGTKYSEPMKALVTGPDGKDVPVQMGSYGVGVSRLLGAIIEASHDEGGIIWPESVAPFDVGVINMRQGDAACDEACETAYKALQAAGRDVLYDDNDTRGGAKFATMDLIGVPWQLIVGPKGIAEGVVELKNRKTGERHSAPLAEVIAQLSAQNPGKAA.

The protein belongs to the class-II aminoacyl-tRNA synthetase family. ProS type 2 subfamily. As to quaternary structure, homodimer.

It is found in the cytoplasm. It carries out the reaction tRNA(Pro) + L-proline + ATP = L-prolyl-tRNA(Pro) + AMP + diphosphate. Catalyzes the attachment of proline to tRNA(Pro) in a two-step reaction: proline is first activated by ATP to form Pro-AMP and then transferred to the acceptor end of tRNA(Pro). The chain is Proline--tRNA ligase from Caulobacter sp. (strain K31).